A 438-amino-acid chain; its full sequence is Glycerol-3-phosphate acyltransferase 3 (438 aa).

Residues 14–34 (WLTLVGGLILLPSAFGLSLGI) form a helical membrane-spanning segment. Serine 68 and serine 77 each carry phosphoserine. The next 2 helical transmembrane spans lie at 137 to 157 (ISPR…CFLL) and 161 to 181 (VTLA…VGQL). An HXXXXD motif motif is present at residues 229-234 (HTSPID).

It belongs to the 1-acyl-sn-glycerol-3-phosphate acyltransferase family. As to expression, most abundant in epididymal fat, followed by small intestine, brown adipose tissue, kidney, heart and colon.

Its subcellular location is the endoplasmic reticulum membrane. It carries out the reaction sn-glycerol 3-phosphate + an acyl-CoA = a 1-acyl-sn-glycero-3-phosphate + CoA. The enzyme catalyses a 1-acyl-sn-glycero-3-phosphate + an acyl-CoA = a 1,2-diacyl-sn-glycero-3-phosphate + CoA. It catalyses the reaction dodecanoyl-CoA + sn-glycerol 3-phosphate = 1-dodecanoyl-sn-glycerol 3-phosphate + CoA. The catalysed reaction is sn-glycerol 3-phosphate + hexadecanoyl-CoA = 1-hexadecanoyl-sn-glycero-3-phosphate + CoA. It carries out the reaction sn-glycerol 3-phosphate + (9Z)-octadecenoyl-CoA = 1-(9Z-octadecenoyl)-sn-glycero-3-phosphate + CoA. The enzyme catalyses (9Z,12Z)-octadecadienoyl-CoA + sn-glycerol 3-phosphate = 1-(9Z,12Z)-octadecadienoyl-sn-glycero-3-phosphate + CoA. It catalyses the reaction 1-tetradecanoyl-sn-glycerol 3-phosphate + (9Z)-octadecenoyl-CoA = 1-tetradecanoyl-2-(9Z)-octadecenoyl-sn-glycero-3-phosphate + CoA. The catalysed reaction is 1-hexadecanoyl-sn-glycero-3-phosphate + (9Z)-octadecenoyl-CoA = 1-hexadecanoyl-2-(9Z-octadecenoyl)-sn-glycero-3-phosphate + CoA. It carries out the reaction 1-(9Z-octadecenoyl)-sn-glycero-3-phosphate + (9Z)-octadecenoyl-CoA = 1,2-di-(9Z-octadecenoyl)-sn-glycero-3-phosphate + CoA. The enzyme catalyses 1-(6Z,9Z,12Z-octadecatrienoyl)-sn-glycero-3-phosphate + (9Z)-octadecenoyl-CoA = (6Z,9Z,12Z)-octadecatrienoyl-2-(9Z)-octadecenoyl-sn-glycero-3-phosphate + CoA. It catalyses the reaction 1-(9Z,12Z,15Z)-octadecatrienoyl-sn-glycero-3-phosphate + (9Z)-octadecenoyl-CoA = 1-(9Z,12Z,15Z)-octadecatrienoyl-2-(9Z)-octadecenoyl-sn-glycero-3-phosphate + CoA. The catalysed reaction is 1-(9Z-octadecenoyl)-sn-glycero-3-phosphate + tetradecanoyl-CoA = 1-(9Z)-octadecenoyl-2-tetradecanoyl-sn-glycero-3-phosphate + CoA. It carries out the reaction 1-(9Z-octadecenoyl)-sn-glycero-3-phosphate + hexadecanoyl-CoA = 1-(9Z)-octadecenoyl-2-hexadecanoyl-sn-glycero-3-phosphate + CoA. The enzyme catalyses 1-(9Z-octadecenoyl)-sn-glycero-3-phosphate + octadecanoyl-CoA = 1-(9Z-octadecenoyl)-2-octadecanoyl-sn-glycero-3-phosphate + CoA. It catalyses the reaction 1-(9Z-octadecenoyl)-sn-glycero-3-phosphate + (9Z,12Z)-octadecadienoyl-CoA = 1-(9Z)-octadecenoyl-2-(9Z,12Z)-octadecadienoyl-sn-glycero-3-phosphate + CoA. The catalysed reaction is 1-(5Z,8Z,11Z,14Z-eicosatetraenoyl)-sn-glycero-3-phosphate + (9Z)-octadecenoyl-CoA = 1-(5Z,8Z,11Z,14Z)-eicosatetraenoyl-2-(9Z)-octadecenoyl-sn-glycero-3-phosphate + CoA. It participates in glycerolipid metabolism; triacylglycerol biosynthesis. The protein operates within phospholipid metabolism; CDP-diacylglycerol biosynthesis; CDP-diacylglycerol from sn-glycerol 3-phosphate: step 1/3. Functionally, converts glycerol-3-phosphate to 1-acyl-sn-glycerol-3-phosphate (lysophosphatidic acid or LPA) by incorporating an acyl moiety at the sn-1 position of the glycerol backbone. Also converts LPA into 1,2-diacyl-sn-glycerol-3-phosphate (phosphatidic acid or PA) by incorporating an acyl moiety at the sn-2 position of the glycerol backbone. Protects cells against lipotoxicity. This Mus musculus (Mouse) protein is Glycerol-3-phosphate acyltransferase 3.